Reading from the N-terminus, the 192-residue chain is Small ribosomal subunit protein uS4B (192 aa).

Phosphoserine is present on residues Ser-89 and Ser-179. The region spanning 107 to 181 (RRLQTQVFKL…CKRKRLRSQQ (75 aa)) is the S4 RNA-binding domain. Positions 166–192 (GGRPGRCKRKRLRSQQEGGEGEEAEEE) are disordered.

This sequence belongs to the universal ribosomal protein uS4 family. In terms of assembly, component of the small ribosomal subunit (SSU). Mature yeast ribosomes consist of a small (40S) and a large (60S) subunit. The 40S small subunit contains 1 molecule of ribosomal RNA (18S rRNA) and at least 33 different proteins. The large 60S subunit contains 3 rRNA molecules (25S, 5.8S and 5S rRNA) and at least 46 different proteins. Interacts with snoRNA U3. uS11 interacts with MPP10. Component of the ribosomal small subunit (SSU) processome composed of at least 40 protein subunits and snoRNA U3.

It is found in the cytoplasm. Its function is as follows. Component of the ribosome, a large ribonucleoprotein complex responsible for the synthesis of proteins in the cell. The small ribosomal subunit (SSU) binds messenger RNAs (mRNAs) and translates the encoded message by selecting cognate aminoacyl-transfer RNA (tRNA) molecules. The large subunit (LSU) contains the ribosomal catalytic site termed the peptidyl transferase center (PTC), which catalyzes the formation of peptide bonds, thereby polymerizing the amino acids delivered by tRNAs into a polypeptide chain. The nascent polypeptides leave the ribosome through a tunnel in the LSU and interact with protein factors that function in enzymatic processing, targeting, and the membrane insertion of nascent chains at the exit of the ribosomal tunnel. uS4 is involved in nucleolar processing of pre-18S ribosomal RNA and ribosome assembly. This Schizosaccharomyces pombe (strain 972 / ATCC 24843) (Fission yeast) protein is Small ribosomal subunit protein uS4B (rps902).